Consider the following 98-residue polypeptide: NADH-ubiquinone oxidoreductase chain 4L (98 aa).

The next 3 helical transmembrane spans lie at 2–22 (SPAV…TLMF), 26–46 (LMST…LATI), and 59–79 (IPIA…ALLA).

It belongs to the complex I subunit 4L family. In terms of assembly, core subunit of respiratory chain NADH dehydrogenase (Complex I) which is composed of 45 different subunits.

Its subcellular location is the mitochondrion inner membrane. It carries out the reaction a ubiquinone + NADH + 5 H(+)(in) = a ubiquinol + NAD(+) + 4 H(+)(out). In terms of biological role, core subunit of the mitochondrial membrane respiratory chain NADH dehydrogenase (Complex I) which catalyzes electron transfer from NADH through the respiratory chain, using ubiquinone as an electron acceptor. Part of the enzyme membrane arm which is embedded in the lipid bilayer and involved in proton translocation. The protein is NADH-ubiquinone oxidoreductase chain 4L (MT-ND4L) of Alexandromys kikuchii (Taiwan vole).